The chain runs to 367 residues: Undecaprenyl-phosphate alpha-N-acetylglucosaminyl 1-phosphate transferase (367 aa).

10 helical membrane passes run 3–23, 46–66, 69–89, 132–152, 158–178, 187–207, 213–233, 242–262, 294–314, and 318–338; these read LLTV…FLFF, LIPL…FGIV, YIPH…IGAL, VLGP…INAF, IDGL…MILW, IWCF…LGIL, VFMG…ILLE, ISPV…VAIM, AFVL…LAEY, and VPEW…GYCI.

Belongs to the glycosyltransferase 4 family. WecA subfamily. It depends on Mg(2+) as a cofactor. The cofactor is Mn(2+).

Its subcellular location is the cell inner membrane. The catalysed reaction is di-trans,octa-cis-undecaprenyl phosphate + UDP-N-acetyl-alpha-D-glucosamine = N-acetyl-alpha-D-glucosaminyl-di-trans,octa-cis-undecaprenyl diphosphate + UMP. The protein operates within bacterial outer membrane biogenesis; LPS O-antigen biosynthesis. It participates in bacterial outer membrane biogenesis; enterobacterial common antigen biosynthesis. Functionally, catalyzes the transfer of the GlcNAc-1-phosphate moiety from UDP-GlcNAc onto the carrier lipid undecaprenyl phosphate (C55-P), yielding GlcNAc-pyrophosphoryl-undecaprenyl (GlcNAc-PP-C55). The chain is Undecaprenyl-phosphate alpha-N-acetylglucosaminyl 1-phosphate transferase from Escherichia coli O157:H7.